Here is a 699-residue protein sequence, read N- to C-terminus: Long-chain-fatty-acid--CoA ligase 1 (699 aa).

Met1 is subject to N-acetylmethionine. At Tyr9 the chain carries 3'-nitrotyrosine. The helical; Signal-anchor for type III membrane protein transmembrane segment at 25–45 (LPTNTLMGFGAFAALTTFWYA) threads the bilayer. Over 46 to 699 (TRPKALKPPC…IDELYATIKI (654 aa)) the chain is Cytoplasmic. At Tyr85 the chain carries Phosphotyrosine. Tyr86 bears the 3'-nitrotyrosine mark. O-linked (GlcNAc) serine glycosylation occurs at Ser136. An N6-acetyllysine mark is found at Lys208, Lys357, and Lys387. The residue at position 621 (Ser621) is a Phosphoserine. Residue Lys633 is modified to N6-acetyllysine.

It belongs to the ATP-dependent AMP-binding enzyme family. Mg(2+) is required as a cofactor.

Its subcellular location is the mitochondrion outer membrane. It localises to the peroxisome membrane. It is found in the microsome membrane. The protein localises to the endoplasmic reticulum membrane. The enzyme catalyses a long-chain fatty acid + ATP + CoA = a long-chain fatty acyl-CoA + AMP + diphosphate. The catalysed reaction is (5Z,8Z,11Z,14Z)-eicosatetraenoate + ATP + CoA = (5Z,8Z,11Z,14Z)-eicosatetraenoyl-CoA + AMP + diphosphate. It catalyses the reaction 3,7,11,15-tetramethylhexadecanoate + ATP + CoA = phytanoyl-CoA + AMP + diphosphate. It carries out the reaction hexadecanoate + ATP + CoA = hexadecanoyl-CoA + AMP + diphosphate. The enzyme catalyses (E)-hexadec-2-enoate + ATP + CoA = (2E)-hexadecenoyl-CoA + AMP + diphosphate. The catalysed reaction is 2,6,10,14-tetramethylpentadecanoate + ATP + CoA = pristanoyl-CoA + AMP + diphosphate. It catalyses the reaction 14,15-epoxy-(5Z,8Z,11Z)-eicosatrienoate + ATP + CoA = 14,15-epoxy-(5Z,8Z,11Z)-eicosatrienoyl-CoA + AMP + diphosphate. It carries out the reaction 5-hydroxy-(6E,8Z,11Z,14Z)-eicosatetraenoate + ATP + CoA = 5-hydroxy-(6E,8Z,11Z,14Z)-eicosatetraenoyl-CoA + AMP + diphosphate. The enzyme catalyses 12-hydroxy-(5Z,8Z,10E,14Z)-eicosatetraenoate + ATP + CoA = 12-hydroxy-(5Z,8Z,10E,14Z)-eicosatetraenoyl-CoA + AMP + diphosphate. The catalysed reaction is 15-hydroxy-(5Z,8Z,11Z,13E)-eicosatetraenoate + ATP + CoA = 15-hydroxy-(5Z,8Z,11Z,13E)-eicosatetraenoyl-CoA + AMP + diphosphate. It catalyses the reaction (9Z)-octadecenoate + ATP + CoA = (9Z)-octadecenoyl-CoA + AMP + diphosphate. Its activity is regulated as follows. Inhibited at high temperature and by arachidonate. Functionally, catalyzes the conversion of long-chain fatty acids to their active form acyl-CoAs for both synthesis of cellular lipids, and degradation via beta-oxidation. Preferentially uses palmitoleate, oleate and linoleate. Preferentially activates arachidonate than epoxyeicosatrienoic acids (EETs) or hydroxyeicosatrienoic acids (HETEs). The polypeptide is Long-chain-fatty-acid--CoA ligase 1 (Mus musculus (Mouse)).